An 853-amino-acid polypeptide reads, in one-letter code: DNA mismatch repair protein MutS (853 aa).

Residue 614–621 (GPNMGGKS) coordinates ATP.

This sequence belongs to the DNA mismatch repair MutS family.

This protein is involved in the repair of mismatches in DNA. It is possible that it carries out the mismatch recognition step. This protein has a weak ATPase activity. The polypeptide is DNA mismatch repair protein MutS (Escherichia coli O1:K1 / APEC).